A 252-amino-acid polypeptide reads, in one-letter code: Glucosamine-6-phosphate deaminase (252 aa).

Asp-67 acts as the Proton acceptor; for enolization step in catalysis. Asn-137 functions as the For ring-opening step in the catalytic mechanism. His-139 functions as the Proton acceptor; for ring-opening step in the catalytic mechanism. Glu-144 (for ring-opening step) is an active-site residue.

It belongs to the glucosamine/galactosamine-6-phosphate isomerase family. NagB subfamily.

The enzyme catalyses alpha-D-glucosamine 6-phosphate + H2O = beta-D-fructose 6-phosphate + NH4(+). The protein operates within amino-sugar metabolism; N-acetylneuraminate degradation; D-fructose 6-phosphate from N-acetylneuraminate: step 5/5. Catalyzes the reversible isomerization-deamination of glucosamine 6-phosphate (GlcN6P) to form fructose 6-phosphate (Fru6P) and ammonium ion. This chain is Glucosamine-6-phosphate deaminase, found in Staphylococcus aureus (strain Mu3 / ATCC 700698).